The sequence spans 419 residues: Putative competence-damage inducible protein (419 aa).

Belongs to the CinA family.

This chain is Putative competence-damage inducible protein, found in Streptococcus agalactiae serotype III (strain NEM316).